A 590-amino-acid polypeptide reads, in one-letter code: MEKMQRTVTCGGLNKDFAGKTVVLNGWIHRKRDHGGITFLNLRDRYGLTQVVVDDDASEDLKALAVSLKQEFCIAVEGLVRPRPDSMINKEMATGEIEVKALKIEVLSKSEVLPFQIDEKTNANEDLRLKYRYLDLRSKAMQEHIMLRSKFTFAVREFLTSKDFLEIETPTFIKSTPEGARDYLVPSRLYPGKFYALPQSPQIYKQILMVSGFDKYFQIARCYRDEDARGDRQPEFTQIDLEMSFASREDVLSLTEGMMQYAFKKSINVDLPKTFERISYDEAIDIYGTDKPDLRFEMKMQDAAFMAEIGNFAVFKDAVSLGGAVKALVVKGQAEAYSRKKIEELEAAAKIYKAKGLAWIKVTEGGAKLEGGVSKFFEGKEAEICSKLGAEKGDLILFVADKYKIACTALGAVRSKLGKDLGLLNPAEFKFAWIVDFPLFEWNEEENKWDPAHHMFSAPQEKYIATMEENPEPVKGDLYDLVLNGYEVASGSIRIHNPELQKRIFKIVGFDESEAEKKFGFLTEAFKYGAPPHGGIAPGLDRIVMIMAGETSIKEVIAFPKNSFAVSPMDDSPSEVDQKQLDELHLVIKE.

Glu-178 contacts L-aspartate. The tract at residues 202-205 is aspartate; the sequence is QIYK. Arg-224 serves as a coordination point for L-aspartate. ATP is bound by residues 224–226 and Gln-233; that span reads RDE. An L-aspartate-binding site is contributed by His-453. Glu-487 contacts ATP. Residue Arg-494 participates in L-aspartate binding. 539–542 is a binding site for ATP; that stretch reads GLDR.

This sequence belongs to the class-II aminoacyl-tRNA synthetase family. Type 1 subfamily. Homodimer.

It localises to the cytoplasm. It catalyses the reaction tRNA(Asx) + L-aspartate + ATP = L-aspartyl-tRNA(Asx) + AMP + diphosphate. Functionally, aspartyl-tRNA synthetase with relaxed tRNA specificity since it is able to aspartylate not only its cognate tRNA(Asp) but also tRNA(Asn). Reaction proceeds in two steps: L-aspartate is first activated by ATP to form Asp-AMP and then transferred to the acceptor end of tRNA(Asp/Asn). This chain is Aspartate--tRNA(Asp/Asn) ligase, found in Treponema denticola (strain ATCC 35405 / DSM 14222 / CIP 103919 / JCM 8153 / KCTC 15104).